Here is a 97-residue protein sequence, read N- to C-terminus: Aspartyl/glutamyl-tRNA(Asn/Gln) amidotransferase subunit C (97 aa).

It belongs to the GatC family. Heterotrimer of A, B and C subunits.

It carries out the reaction L-glutamyl-tRNA(Gln) + L-glutamine + ATP + H2O = L-glutaminyl-tRNA(Gln) + L-glutamate + ADP + phosphate + H(+). The catalysed reaction is L-aspartyl-tRNA(Asn) + L-glutamine + ATP + H2O = L-asparaginyl-tRNA(Asn) + L-glutamate + ADP + phosphate + 2 H(+). Allows the formation of correctly charged Asn-tRNA(Asn) or Gln-tRNA(Gln) through the transamidation of misacylated Asp-tRNA(Asn) or Glu-tRNA(Gln) in organisms which lack either or both of asparaginyl-tRNA or glutaminyl-tRNA synthetases. The reaction takes place in the presence of glutamine and ATP through an activated phospho-Asp-tRNA(Asn) or phospho-Glu-tRNA(Gln). The chain is Aspartyl/glutamyl-tRNA(Asn/Gln) amidotransferase subunit C from Listeria monocytogenes serotype 4b (strain CLIP80459).